The primary structure comprises 231 residues: 2-C-methyl-D-erythritol 4-phosphate cytidylyltransferase (231 aa).

The protein belongs to the IspD/TarI cytidylyltransferase family. IspD subfamily.

It catalyses the reaction 2-C-methyl-D-erythritol 4-phosphate + CTP + H(+) = 4-CDP-2-C-methyl-D-erythritol + diphosphate. It functions in the pathway isoprenoid biosynthesis; isopentenyl diphosphate biosynthesis via DXP pathway; isopentenyl diphosphate from 1-deoxy-D-xylulose 5-phosphate: step 2/6. In terms of biological role, catalyzes the formation of 4-diphosphocytidyl-2-C-methyl-D-erythritol from CTP and 2-C-methyl-D-erythritol 4-phosphate (MEP). This chain is 2-C-methyl-D-erythritol 4-phosphate cytidylyltransferase, found in Dictyoglomus thermophilum (strain ATCC 35947 / DSM 3960 / H-6-12).